The following is a 236-amino-acid chain: MALFRRPNWSALFEKIFIQKSFLGFCSLRVGCEIIIWFAIINKVSGLYGIVSLFQNSDASPWQVLMYVSSVLMLILFSWLAIHIPKSSVPHALILFYVYLIDFLLNVLFTVLFALSWFSKLVQSDSSSTEESADSDPSPSLLYLFFQAESIPSLLLLIFFASLKFYFVLITLSYSNKLIVDSGIRPQNLPPNFSGRVTRLLMKPYIMAANRSYLRNHTKRFTDSIELEQRLMDEVV.

A run of 4 helical transmembrane segments spans residues 34–54, 64–84, 93–113, and 151–171; these read IIIWFAIINKVSGLYGIVSLF, VLMYVSSVLMLILFSWLAIHI, LILFYVYLIDFLLNVLFTVLF, and IPSLLLLIFFASLKFYFVLIT.

The protein belongs to the KEI1 family. In terms of assembly, component of the inositol phosphorylceramide synthase complex composed of at least aur1 and kei1.

It is found in the golgi apparatus membrane. Regulatory component of the inositol phosphorylceramide (ICP) synthase which catalyzes the addition of a phosphorylinositol group onto ceramide to form inositol phosphorylceramide, an essential step in sphingolipid biosynthesis. Helps the medial Golgi localization of IPC synthase in a COPI vesicle-dependent manner. This is Inositol phosphorylceramide synthase regulatory subunit kei1 (kei1) from Schizosaccharomyces pombe (strain 972 / ATCC 24843) (Fission yeast).